We begin with the raw amino-acid sequence, 131 residues long: Large ribosomal subunit protein bL19 (131 aa).

Belongs to the bacterial ribosomal protein bL19 family.

In terms of biological role, this protein is located at the 30S-50S ribosomal subunit interface and may play a role in the structure and function of the aminoacyl-tRNA binding site. The polypeptide is Large ribosomal subunit protein bL19 (Afipia carboxidovorans (strain ATCC 49405 / DSM 1227 / KCTC 32145 / OM5) (Oligotropha carboxidovorans)).